The chain runs to 461 residues: Aspartyl/glutamyl-tRNA(Asn/Gln) amidotransferase subunit B (461 aa).

It belongs to the GatB/GatE family. GatB subfamily. In terms of assembly, heterotrimer of A, B and C subunits.

It carries out the reaction L-glutamyl-tRNA(Gln) + L-glutamine + ATP + H2O = L-glutaminyl-tRNA(Gln) + L-glutamate + ADP + phosphate + H(+). The catalysed reaction is L-aspartyl-tRNA(Asn) + L-glutamine + ATP + H2O = L-asparaginyl-tRNA(Asn) + L-glutamate + ADP + phosphate + 2 H(+). Allows the formation of correctly charged Asn-tRNA(Asn) or Gln-tRNA(Gln) through the transamidation of misacylated Asp-tRNA(Asn) or Glu-tRNA(Gln) in organisms which lack either or both of asparaginyl-tRNA or glutaminyl-tRNA synthetases. The reaction takes place in the presence of glutamine and ATP through an activated phospho-Asp-tRNA(Asn) or phospho-Glu-tRNA(Gln). This is Aspartyl/glutamyl-tRNA(Asn/Gln) amidotransferase subunit B from Methanopyrus kandleri (strain AV19 / DSM 6324 / JCM 9639 / NBRC 100938).